Consider the following 396-residue polypeptide: Cytochrome b (396 aa).

4 helical membrane passes run 37–57, 81–102, 117–137, and 182–202; these read FGSL…ILAM, WLMR…YAHI, WNVG…GYVL, and FFTF…IHIM. Heme b contacts are provided by histidine 87 and histidine 101. Heme b is bound by residues histidine 186 and histidine 200. Histidine 205 serves as a coordination point for a ubiquinone. A run of 4 helical transmembrane segments spans residues 230-250, 292-312, 324-344, and 351-371; these read FKDI…SLLP, LGGV…PFTH, LAQV…WLGG, and FILM…LIFP.

The protein belongs to the cytochrome b family. The cytochrome bc1 complex contains 3 respiratory subunits (MT-CYB, CYC1 and UQCRFS1), 2 core proteins (UQCRC1 and UQCRC2) and probably 6 low-molecular weight proteins. Heme b is required as a cofactor.

It localises to the mitochondrion inner membrane. Its function is as follows. Component of the ubiquinol-cytochrome c reductase complex (complex III or cytochrome b-c1 complex) that is part of the mitochondrial respiratory chain. The b-c1 complex mediates electron transfer from ubiquinol to cytochrome c. Contributes to the generation of a proton gradient across the mitochondrial membrane that is then used for ATP synthesis. The polypeptide is Cytochrome b (mt-cyb) (Lampetra fluviatilis (European river lamprey)).